The following is a 583-amino-acid chain: Penicillin-binding protein activator LpoA (583 aa).

An N-terminal signal peptide occupies residues 1 to 24; that stretch reads MATILKQKLKTFFVPTAITLLLSA. Cysteine 25 carries N-palmitoyl cysteine lipidation. Cysteine 25 is lipidated: S-diacylglycerol cysteine.

The protein belongs to the LpoA family. In terms of assembly, interacts with PBP1a.

It localises to the cell outer membrane. Its function is as follows. Regulator of peptidoglycan synthesis that is essential for the function of penicillin-binding protein 1A (PBP1a). The sequence is that of Penicillin-binding protein activator LpoA from Haemophilus ducreyi (strain 35000HP / ATCC 700724).